The chain runs to 162 residues: Phenazine biosynthesis protein PhzB 2 (162 aa).

Threonine 91 is subject to Phosphothreonine.

The protein belongs to the PhzA/PhzB family.

In terms of biological role, involved in the biosynthesis of the antibiotic phenazine, a nitrogen-containing heterocyclic molecule having important roles in virulence, competition and biological control. This chain is Phenazine biosynthesis protein PhzB 2 (phzB2), found in Pseudomonas aeruginosa (strain UCBPP-PA14).